Consider the following 209-residue polypeptide: Urease accessory protein UreG (209 aa).

16–23 (GPVGSGKT) lines the GTP pocket.

The protein belongs to the SIMIBI class G3E GTPase family. UreG subfamily. Homodimer. UreD, UreF and UreG form a complex that acts as a GTP-hydrolysis-dependent molecular chaperone, activating the urease apoprotein by helping to assemble the nickel containing metallocenter of UreC. The UreE protein probably delivers the nickel.

It localises to the cytoplasm. Its function is as follows. Facilitates the functional incorporation of the urease nickel metallocenter. This process requires GTP hydrolysis, probably effectuated by UreG. The sequence is that of Urease accessory protein UreG from Blochmanniella floridana.